A 667-amino-acid chain; its full sequence is High affinity sulfate transporter 1 (667 aa).

The tract at residues 16-38 (ETRSNSSSHRHGGGGGGDDTTSL) is disordered. 11 consecutive transmembrane segments (helical) span residues 106-126 (GDFIAGLTIASLCIPQDLAYA), 131-151 (LDPWYGLYSSFVAPLVYAFMG), 156-176 (IAIGPVAVVSLLLGTLLSNEI), 185-205 (LRLAFTATFFAGVTQMLLGVC), 208-228 (GFLIDFLSHAAIVGFMAGAAI), 269-289 (WETILIGLSFLIFLLITKYIA), 296-316 (FWVSAISPMISVIVSTFFVYI), 350-370 (GAGVRVGVVAGLVALTEAIAI), 425-445 (VSNIVMSIVVLLTLLVITPLF), 452-472 (VLASIIIAAVVNLVNIEAMVL), and 486-506 (GAFFGVIFKSVEIGLLIAVAI). The 124-residue stretch at 537–660 (QYPKAAQIPG…LTVADAVATY (124 aa)) folds into the STAS domain.

This sequence belongs to the SLC26A/SulP transporter (TC 2.A.53) family.

The protein localises to the membrane. In terms of biological role, high-affinity H(+)/sulfate cotransporter that mediates the uptake of sulfate by plant roots from low concentrations of sulfate in the soil solution. The chain is High affinity sulfate transporter 1 (ST1) from Stylosanthes hamata (Caribbean stylo).